The chain runs to 271 residues: Probable ribosomal RNA small subunit methyltransferase A (271 aa).

S-adenosyl-L-methionine-binding residues include histidine 19, leucine 21, glycine 46, glutamate 67, aspartate 92, and asparagine 107.

It belongs to the class I-like SAM-binding methyltransferase superfamily. rRNA adenine N(6)-methyltransferase family. RsmA subfamily.

It localises to the cytoplasm. Functionally, specifically dimethylates two adjacent adenosines in the loop of a conserved hairpin near the 3'-end of 16S rRNA in the 30S particle. May play a critical role in biogenesis of 30S subunits. This Methanosarcina mazei (strain ATCC BAA-159 / DSM 3647 / Goe1 / Go1 / JCM 11833 / OCM 88) (Methanosarcina frisia) protein is Probable ribosomal RNA small subunit methyltransferase A.